The following is a 68-amino-acid chain: DNA-directed RNA polymerase subunit omega (68 aa).

It belongs to the RNA polymerase subunit omega family. As to quaternary structure, the RNAP catalytic core consists of 2 alpha, 1 beta, 1 beta' and 1 omega subunit. When a sigma factor is associated with the core the holoenzyme is formed, which can initiate transcription.

The catalysed reaction is RNA(n) + a ribonucleoside 5'-triphosphate = RNA(n+1) + diphosphate. Its function is as follows. Promotes RNA polymerase assembly. Latches the N- and C-terminal regions of the beta' subunit thereby facilitating its interaction with the beta and alpha subunits. The protein is DNA-directed RNA polymerase subunit omega of Sulfurovum sp. (strain NBC37-1).